A 756-amino-acid polypeptide reads, in one-letter code: Neutral ceramidase (756 aa).

The Cytoplasmic portion of the chain corresponds to 1 to 11; it reads MAKRTFSTLEA. A helical; Signal-anchor for type II membrane protein membrane pass occupies residues 12–32; it reads FLIFLLVIMTVITVALLTLLF. Over 33 to 756 the chain is Lumenal; that stretch reads VTSGTIENHK…ISSPFEVVTT (724 aa). O-linked (GalNAc...) threonine glycans are attached at residues T56, T57, T58, and T64. L110 is a Ca(2+) binding site. H170 lines the Zn(2+) pocket. N193 is a glycosylation site (N-linked (GlcNAc...) asparagine). Position 279 (H279) interacts with Zn(2+). S330 acts as the Nucleophile in catalysis. Intrachain disulfides connect C338–C352 and C345–C360. Residues N407 and N444 are each glycosylated (N-linked (GlcNAc...) asparagine). A disulfide bond links C424 and C474. Zn(2+) is bound by residues E516 and Y555. The Ca(2+) site is built by D688, S690, and T693. The segment at 746–756 is required for correct folding and localization; that stretch reads GISSPFEVVTT.

Belongs to the neutral ceramidase family. May interact with CAV1. Requires Zn(2+) as cofactor. In terms of processing, proteolytic cleavage of the N-terminus removes the signal-anchor and produces a soluble form of the protein. Post-translationally, N-glycosylated. Required for enzyme activity. O-glycosylated. Required to retain it as a type II membrane protein at the cell surface. In terms of processing, phosphorylated. May prevent ubiquitination and subsequent degradation. Post-translationally, ubiquitinated, leading to its degradation by the proteasome. Ubiquitination is triggered by nitric oxide. In terms of tissue distribution, widely expressed. Strongly expressed in small intestine and to a lower extent in liver and kidney. Highly expressed in duodenum, jejunum and ileum along the brush border of the small intestine (at protein level).

It is found in the cell membrane. The protein localises to the membrane raft. It localises to the membrane. Its subcellular location is the caveola. The protein resides in the golgi apparatus membrane. It is found in the mitochondrion. The protein localises to the secreted. It localises to the extracellular exosome. It catalyses the reaction an N-acylsphing-4-enine + H2O = sphing-4-enine + a fatty acid. It carries out the reaction N-hexadecanoylsphing-4-enine + H2O = sphing-4-enine + hexadecanoate. The catalysed reaction is N-dodecanoylsphing-4-enine + H2O = dodecanoate + sphing-4-enine. The enzyme catalyses N-octadecanoylsphing-4-enine + H2O = sphing-4-enine + octadecanoate. It catalyses the reaction N-octanoylsphing-4-enine + H2O = octanoate + sphing-4-enine. It carries out the reaction N-(hexanoyl)sphing-4-enine + H2O = hexanoate + sphing-4-enine. The catalysed reaction is N-tetradecanoylsphing-4-enine + H2O = tetradecanoate + sphing-4-enine. The enzyme catalyses N-(9Z-octadecenoyl)-sphing-4-enine + H2O = sphing-4-enine + (9Z)-octadecenoate. It catalyses the reaction N-(15Z-tetracosenoyl)-sphing-4-enine + H2O = (15Z)-tetracosenoate + sphing-4-enine. It carries out the reaction sphinganine + hexadecanoate = N-hexadecanoylsphinganine + H2O. The catalysed reaction is N-(octadecanoyl)-sphinganine + H2O = sphinganine + octadecanoate. Its pathway is lipid metabolism; sphingolipid metabolism. Inhibited by D-erythro-MAPP. Its function is as follows. Plasma membrane ceramidase that hydrolyzes sphingolipid ceramides into sphingosine and free fatty acids at neutral pH. Ceramides, sphingosine, and its phosphorylated form sphingosine-1-phosphate are bioactive lipids that mediate cellular signaling pathways regulating several biological processes including cell proliferation, apoptosis and differentiation. Also catalyzes the reverse reaction allowing the synthesis of ceramides from fatty acids and sphingosine. Together with sphingomyelinase, participates in the production of sphingosine and sphingosine-1-phosphate from the degradation of sphingomyelin, a sphingolipid enriched in the plasma membrane of cells. Also participates in the hydrolysis of ceramides from the extracellular milieu allowing the production of sphingosine-1-phosphate inside and outside cells. This is the case for instance with the digestion of dietary sphingolipids in the intestinal tract. The polypeptide is Neutral ceramidase (Asah2) (Mus musculus (Mouse)).